Here is a 144-residue protein sequence, read N- to C-terminus: Large ribosomal subunit protein uL15 (144 aa).

Residues 20–49 (GRGIGSGLGKTGGRGHKGQKSRSGGFHKVG) form a disordered region. Positions 21 to 31 (RGIGSGLGKTG) are enriched in gly residues.

This sequence belongs to the universal ribosomal protein uL15 family. In terms of assembly, part of the 50S ribosomal subunit.

Its function is as follows. Binds to the 23S rRNA. This is Large ribosomal subunit protein uL15 from Neisseria meningitidis serogroup A / serotype 4A (strain DSM 15465 / Z2491).